Here is a 172-residue protein sequence, read N- to C-terminus: Trypsin inhibitor DE-3 (172 aa).

Cystine bridges form between Cys-39-Cys-83 and Cys-132-Cys-139.

The protein belongs to the protease inhibitor I3 (leguminous Kunitz-type inhibitor) family.

Functionally, inhibition of trypsin. The protein is Trypsin inhibitor DE-3 of Erythrina caffra (Kaffir tree).